We begin with the raw amino-acid sequence, 453 residues long: Pup--protein ligase (453 aa).

Position 9 (Glu-9) interacts with Mg(2+). An ATP-binding site is contributed by Arg-53. Tyr-55 contributes to the Mg(2+) binding site. Residue Asp-57 is the Proton acceptor of the active site. Mg(2+) is bound at residue Glu-63. Positions 66 and 420 each coordinate ATP.

This sequence belongs to the Pup ligase/Pup deamidase family. Pup-conjugating enzyme subfamily.

It catalyses the reaction ATP + [prokaryotic ubiquitin-like protein]-L-glutamate + [protein]-L-lysine = ADP + phosphate + N(6)-([prokaryotic ubiquitin-like protein]-gamma-L-glutamyl)-[protein]-L-lysine.. It participates in protein degradation; proteasomal Pup-dependent pathway. Its pathway is protein modification; protein pupylation. Its function is as follows. Catalyzes the covalent attachment of the prokaryotic ubiquitin-like protein modifier Pup to the proteasomal substrate proteins, thereby targeting them for proteasomal degradation. This tagging system is termed pupylation. The ligation reaction involves the side-chain carboxylate of the C-terminal glutamate of Pup and the side-chain amino group of a substrate lysine. The chain is Pup--protein ligase from Kineococcus radiotolerans (strain ATCC BAA-149 / DSM 14245 / SRS30216).